A 296-amino-acid chain; its full sequence is ATP phosphoribosyltransferase (296 aa).

The protein belongs to the ATP phosphoribosyltransferase family.

It localises to the cytoplasm. It carries out the reaction 1-(5-phospho-beta-D-ribosyl)-ATP + diphosphate = 5-phospho-alpha-D-ribose 1-diphosphate + ATP. The protein operates within amino-acid biosynthesis; L-histidine biosynthesis; L-histidine from 5-phospho-alpha-D-ribose 1-diphosphate: step 1/9. Functionally, catalyzes the condensation of ATP and 5-phosphoribose 1-diphosphate to form N'-(5'-phosphoribosyl)-ATP (PR-ATP). Has a crucial role in the pathway because the rate of histidine biosynthesis seems to be controlled primarily by regulation of the enzymatic activity. This is ATP phosphoribosyltransferase (HIS1) from Yarrowia lipolytica (strain CLIB 122 / E 150) (Yeast).